Here is a 144-residue protein sequence, read N- to C-terminus: Large ribosomal subunit protein uL15 (144 aa).

The tract at residues 1 to 52 (MRLNTLSPAEGAKHAPKRVGRGIGSGLGKTAGRGHKGQNSRSGGGVRRGFEG) is disordered. Residues 21-31 (RGIGSGLGKTA) show a composition bias toward gly residues.

This sequence belongs to the universal ribosomal protein uL15 family. As to quaternary structure, part of the 50S ribosomal subunit.

In terms of biological role, binds to the 23S rRNA. The protein is Large ribosomal subunit protein uL15 of Yersinia enterocolitica serotype O:8 / biotype 1B (strain NCTC 13174 / 8081).